The chain runs to 371 residues: DNA primase large subunit PriL (371 aa).

Residues C230, C301, C310, and C317 each contribute to the [4Fe-4S] cluster site. The interval 337 to 371 is disordered; sequence EREKEEGKEKGNEEKKEKREEHEKKNEKGNEIKEK.

It belongs to the eukaryotic-type primase large subunit family. Heterodimer of a small subunit (PriS) and a large subunit (PriL). The cofactor is [4Fe-4S] cluster.

Its function is as follows. Regulatory subunit of DNA primase, an RNA polymerase that catalyzes the synthesis of short RNA molecules used as primers for DNA polymerase during DNA replication. Stabilizes and modulates the activity of the small subunit, increasing the rate of DNA synthesis, and conferring RNA synthesis capability. The DNA polymerase activity may enable DNA primase to also catalyze primer extension after primer synthesis. May also play a role in DNA repair. The protein is DNA primase large subunit PriL of Methanosarcina acetivorans (strain ATCC 35395 / DSM 2834 / JCM 12185 / C2A).